We begin with the raw amino-acid sequence, 107 residues long: Phosphoribosyl-ATP pyrophosphatase (107 aa).

The protein belongs to the PRA-PH family.

It is found in the cytoplasm. The catalysed reaction is 1-(5-phospho-beta-D-ribosyl)-ATP + H2O = 1-(5-phospho-beta-D-ribosyl)-5'-AMP + diphosphate + H(+). It participates in amino-acid biosynthesis; L-histidine biosynthesis; L-histidine from 5-phospho-alpha-D-ribose 1-diphosphate: step 2/9. In Methylobacterium radiotolerans (strain ATCC 27329 / DSM 1819 / JCM 2831 / NBRC 15690 / NCIMB 10815 / 0-1), this protein is Phosphoribosyl-ATP pyrophosphatase.